Here is a 431-residue protein sequence, read N- to C-terminus: METISIINAADHVNEQVKIGVWLSNKRSSGKIAFLQLRDGTATFQGVALKNELGETAFAQLTDLAQETSLWVTGTIHADTRSPFGYELAISQFEVVGTSHDYPITPKDHGIDFLLDHRHLWLRSSRPNAIMRIRNEVIRAVYEFFNDRGFIKIDAPILTGSAPEGTTELFKTDYFGQDAYLSQSGQLYGEAGAMAFGKIFTFGPTFRAEKSKTRRHLTEFWQLEPEMAWMHQDESLEVQEQLVAYLGQAVIDHCPHELAVLDRDVATLQKYTKLPFPRVSYDDAITLLQANGFDVDWGVDFGSPEETFLAEHFDQPVFVLNYPKAIKAFYMQAHPTRDDVVIAADLLAPEGYGEIIGGSERSTDYDYLKERLLASGQDLQDYEWYLDLRKYGSVPHSGFGMGLERFLAWITLQDHVRETIPFPRMLHRIYP.

The protein belongs to the class-II aminoacyl-tRNA synthetase family. As to quaternary structure, homodimer.

The protein localises to the cytoplasm. The enzyme catalyses tRNA(Asn) + L-asparagine + ATP = L-asparaginyl-tRNA(Asn) + AMP + diphosphate + H(+). This chain is Asparagine--tRNA ligase 1 (asnS1), found in Lactiplantibacillus plantarum (strain ATCC BAA-793 / NCIMB 8826 / WCFS1) (Lactobacillus plantarum).